A 206-amino-acid chain; its full sequence is Small ribosomal subunit protein uS4 (206 aa).

The 61-residue stretch at Ser-96 to Ala-156 folds into the S4 RNA-binding domain.

The protein belongs to the universal ribosomal protein uS4 family. In terms of assembly, part of the 30S ribosomal subunit. Contacts protein S5. The interaction surface between S4 and S5 is involved in control of translational fidelity.

In terms of biological role, one of the primary rRNA binding proteins, it binds directly to 16S rRNA where it nucleates assembly of the body of the 30S subunit. Functionally, with S5 and S12 plays an important role in translational accuracy. The chain is Small ribosomal subunit protein uS4 from Hydrogenovibrio crunogenus (strain DSM 25203 / XCL-2) (Thiomicrospira crunogena).